The sequence spans 67 residues: UPF0337 protein CC_0938 (67 aa).

A disordered region spans residues A37 to L67. Residues A41 to Q61 show a composition bias toward basic and acidic residues.

This sequence belongs to the UPF0337 (CsbD) family.

This is UPF0337 protein CC_0938 from Caulobacter vibrioides (strain ATCC 19089 / CIP 103742 / CB 15) (Caulobacter crescentus).